Here is a 289-residue protein sequence, read N- to C-terminus: Nucleotide-binding protein FRAAL4592 (289 aa).

13 to 20 (GLSGAGRS) serves as a coordination point for ATP. 64–67 (DVRG) serves as a coordination point for GTP.

Belongs to the RapZ-like family.

Its function is as follows. Displays ATPase and GTPase activities. In Frankia alni (strain DSM 45986 / CECT 9034 / ACN14a), this protein is Nucleotide-binding protein FRAAL4592.